The following is a 192-amino-acid chain: Inosine triphosphate pyrophosphatase (192 aa).

Residue 10-15 (TGNANK) participates in ITP binding. Glutamate 46 contributes to the Mg(2+) binding site. ITP is bound by residues lysine 58, 74–75 (DT), lysine 91, 149–152 (FGWD), lysine 172, and 177–178 (HR).

This sequence belongs to the HAM1 NTPase family. Homodimer. Mg(2+) is required as a cofactor. Mn(2+) serves as cofactor.

The protein resides in the cytoplasm. It is found in the nucleus. It catalyses the reaction ITP + H2O = IMP + diphosphate + H(+). It carries out the reaction dITP + H2O = dIMP + diphosphate + H(+). The enzyme catalyses XTP + H2O = XMP + diphosphate + H(+). Pyrophosphatase that hydrolyzes non-canonical purine nucleotides such as inosine triphosphate (ITP), deoxyinosine triphosphate (dITP) or xanthosine 5'-triphosphate (XTP) to their respective monophosphate derivatives. The enzyme does not distinguish between the deoxy- and ribose forms. Probably excludes non-canonical purines from RNA and DNA precursor pools, thus preventing their incorporation into RNA and DNA and avoiding chromosomal lesions. The protein is Inosine triphosphate pyrophosphatase of Puccinia graminis f. sp. tritici (strain CRL 75-36-700-3 / race SCCL) (Black stem rust fungus).